The sequence spans 539 residues: Diacylglycerol O-acyltransferase 1 (539 aa).

Residues 1-104 (MAISDMPEST…NDGGEKIANG (104 aa)) are disordered. The segment covering 33–52 (TETTEVSDSNSKTTDPDSGN) has biased composition (polar residues). Positions 56–80 (ESVRVRDSSTDESLARKSCEDDGSR) are enriched in basic and acidic residues. 7 consecutive transmembrane segments (helical) span residues 143 to 163 (HAGLFNLCIVVLVAVNSRLII), 187 to 207 (WPLLMCCLTLPIFPAAAFVVE), 219 to 239 (VVLLLHFIITTAALLYPVFVI), 244 to 264 (SVVLSGVTLMLFACIVWLKLV), 294 to 314 (YPYSVSFKSLAYFMVAPTLCY), 334 to 354 (VKLIIFTGVMGFIIEQYINPI), and 383 to 403 (VWLCMFYCFFHLWLNILAELL). An FYXDWWN motif motif is present at residues 410–416 (FYKDWWN). 3 consecutive transmembrane segments (helical) span residues 451–471 (GVAILIAFFVSAIFHELCIAV), 473–493 (CHIFKLWAFIGIMCQVPLVLI), and 506–526 (VGNMIFWFFFCILGQPMCVLL). His-465 is an active-site residue.

The protein belongs to the membrane-bound acyltransferase family. Sterol o-acyltransferase subfamily.

The protein resides in the endoplasmic reticulum membrane. The catalysed reaction is an acyl-CoA + a 1,2-diacyl-sn-glycerol = a triacyl-sn-glycerol + CoA. Its pathway is glycerolipid metabolism; triacylglycerol biosynthesis. Major contributor to triacylglycerol (TAG) synthesis and oil accumulation in developing seeds. Catalyzes the acylation of the sn-3 hydroxy group of sn-1,2-diacylglycerol using acyl-CoA. Has a marked preference for oleoyl-CoA as substrate. This Corylus americana (American hazelnut) protein is Diacylglycerol O-acyltransferase 1.